The sequence spans 302 residues: Putative glycine N-acyltransferase-like protein 1B (302 aa).

It belongs to the glycine N-acyltransferase family.

It catalyses the reaction an acyl-CoA + L-glutamine = an N(2)-acyl-L-glutamine + CoA + H(+). Its function is as follows. Putative acyltransferase which transfers an acyl group to the N-terminus of glutamine. Can use phenylacetyl-CoA as an acyl donor. The chain is Putative glycine N-acyltransferase-like protein 1B from Homo sapiens (Human).